We begin with the raw amino-acid sequence, 248 residues long: Coproheme decarboxylase (248 aa).

Fe-coproporphyrin III contacts are provided by residues arginine 130, tyrosine 144, 144–148 (YPMDK), lysine 148, histidine 171, glutamine 184, and serine 222. The active site involves tyrosine 144.

Belongs to the ChdC family. Type 1 subfamily. Homopentamer. It depends on Fe-coproporphyrin III as a cofactor.

The enzyme catalyses Fe-coproporphyrin III + 2 H2O2 + 2 H(+) = heme b + 2 CO2 + 4 H2O. It carries out the reaction Fe-coproporphyrin III + H2O2 + H(+) = harderoheme III + CO2 + 2 H2O. The catalysed reaction is harderoheme III + H2O2 + H(+) = heme b + CO2 + 2 H2O. Its pathway is porphyrin-containing compound metabolism; protoheme biosynthesis. Functionally, involved in coproporphyrin-dependent heme b biosynthesis. Catalyzes the decarboxylation of Fe-coproporphyrin III (coproheme) to heme b (protoheme IX), the last step of the pathway. The reaction occurs in a stepwise manner with a three-propionate harderoheme intermediate. The polypeptide is Coproheme decarboxylase (Geobacillus stearothermophilus (strain DSM 13240 / CIP 106956 / 10)).